Reading from the N-terminus, the 262-residue chain is Expansin-A13 (262 aa).

A signal peptide spans 1–22; sequence MAGVARMLAAVVCAIMPAAAMA. The Expansin-like EG45 domain occupies 52–167; sequence GGACGYGNLY…QRVPCMKKGG (116 aa). The Expansin-like CBD domain maps to 177 to 257; the sequence is YFQLVLLTNV…GWRFGQTFAS (81 aa).

The protein belongs to the expansin family. Expansin A subfamily. In terms of tissue distribution, expressed in roots and flowers.

Its subcellular location is the secreted. It localises to the cell wall. The protein localises to the membrane. Functionally, may cause loosening and extension of plant cell walls by disrupting non-covalent bonding between cellulose microfibrils and matrix glucans. No enzymatic activity has been found. May be required for rapid internodal elongation in deepwater rice during submergence. The protein is Expansin-A13 (EXPA13) of Oryza sativa subsp. japonica (Rice).